The chain runs to 873 residues: Protein translocase subunit SecA (873 aa).

Residues Gln-88, 106–110 (GEGKT), and Asp-501 each bind ATP. 4 residues coordinate Zn(2+): Cys-856, Cys-858, Cys-867, and His-868.

It belongs to the SecA family. As to quaternary structure, monomer and homodimer. Part of the essential Sec protein translocation apparatus which comprises SecA, SecYEG and auxiliary proteins SecDF-YajC and YidC. Zn(2+) serves as cofactor.

The protein localises to the cell inner membrane. It is found in the cytoplasm. The enzyme catalyses ATP + H2O + cellular proteinSide 1 = ADP + phosphate + cellular proteinSide 2.. Its function is as follows. Part of the Sec protein translocase complex. Interacts with the SecYEG preprotein conducting channel. Has a central role in coupling the hydrolysis of ATP to the transfer of proteins into and across the cell membrane, serving both as a receptor for the preprotein-SecB complex and as an ATP-driven molecular motor driving the stepwise translocation of polypeptide chains across the membrane. In Anaplasma phagocytophilum (strain HZ), this protein is Protein translocase subunit SecA.